The sequence spans 424 residues: MDSGPLWDANPTPRGTLSAPNATTPWLGRDEELAKVEIGVLATVLVLATGGNLAVLLTLGQLGRKRSRMHLFVLHLALTDLAVALFQVLPQLLWDITYRFQGPDLLCRAVKYLQVLSMFASTYMLLAMTLDRYLAVCHPLRSLQQPGQSTYLLIAAPWLLAAIFSLPQVFIFSLREVIQGSGVLDCWADFGFPWGPRAYLTWTTLAIFVLPVTMLTACYSLICHEICKNLKVKTQAWRVGGGGWRTWDRPSPSTLAATTRGLPSRVSSINTISRAKIRTVKMTFVIVLAYIACWAPFFSVQMWSVWDKNAPDEDSTNVAFTISMLLGNLNSCCNPWIYMGFNSHLLPRPLRHLACCGGPQPRMRRRLSDGSLSSRHTTLLTRSSCPATLSLSLSLTLSGRPRPEESPRDLELADGEGTAETIIF.

The tract at residues 1-22 (MDSGPLWDANPTPRGTLSAPNA) is disordered. Over 1–35 (MDSGPLWDANPTPRGTLSAPNATTPWLGRDEELAK) the chain is Extracellular. Polar residues predominate over residues 13–22 (PRGTLSAPNA). A glycan (N-linked (GlcNAc...) asparagine) is linked at asparagine 21. Residues 36–59 (VEIGVLATVLVLATGGNLAVLLTL) form a helical membrane-spanning segment. The Cytoplasmic segment spans residues 60–71 (GQLGRKRSRMHL). A helical membrane pass occupies residues 72–93 (FVLHLALTDLAVALFQVLPQLL). Residues 94 to 108 (WDITYRFQGPDLLCR) lie on the Extracellular side of the membrane. Cysteine 107 and cysteine 186 form a disulfide bridge. Residues 109–130 (AVKYLQVLSMFASTYMLLAMTL) traverse the membrane as a helical segment. The Cytoplasmic portion of the chain corresponds to 131 to 151 (DRYLAVCHPLRSLQQPGQSTY). A helical transmembrane segment spans residues 152–173 (LLIAAPWLLAAIFSLPQVFIFS). The Extracellular segment spans residues 174-201 (LREVIQGSGVLDCWADFGFPWGPRAYLT). The chain crosses the membrane as a helical span at residues 202 to 222 (WTTLAIFVLPVTMLTACYSLI). Over 223–283 (CHEICKNLKV…RAKIRTVKMT (61 aa)) the chain is Cytoplasmic. A helical membrane pass occupies residues 284 to 303 (FVIVLAYIACWAPFFSVQMW). At 304-321 (SVWDKNAPDEDSTNVAFT) the chain is on the extracellular side. Residues 322–341 (ISMLLGNLNSCCNPWIYMGF) form a helical membrane-spanning segment. Residues 342 to 424 (NSHLLPRPLR…GEGTAETIIF (83 aa)) lie on the Cytoplasmic side of the membrane. The segment at 398 to 417 (SGRPRPEESPRDLELADGEG) is disordered. Positions 401–411 (PRPEESPRDLE) are enriched in basic and acidic residues.

This sequence belongs to the G-protein coupled receptor 1 family. Vasopressin/oxytocin receptor subfamily.

The protein resides in the cell membrane. In terms of biological role, receptor for arginine vasopressin. The activity of this receptor is mediated by G proteins which activate a phosphatidyl-inositol-calcium second messenger system. Functionally, (Microbial infection) During SARS coronavirus-2/SARS-CoV-2 infection, may recognize and internalize the complex formed by AVP/Arg-vasopressin, SARS-CoV-2 spike protein and secreted ACE2 through DNM2/dynamin 2-dependent endocytosis. The sequence is that of Vasopressin V1b receptor from Homo sapiens (Human).